Reading from the N-terminus, the 1112-residue chain is Lacto-N-biosidase (1112 aa).

An N-terminal signal peptide occupies residues 1 to 34; that stretch reads MEKSSNRRFGVRTVAAIVAGLMVGGMCTAMTASA. Cysteines 187 and 189 form a disulfide. Beta-D-galactosyl-(1-&gt;3)-N-acetyl-D-glucosamine contacts are provided by Gln-190, Glu-216, Asn-259, Asp-320, Glu-321, Tyr-419, and Asp-467. Glu-321 serves as the catalytic Proton donor/acceptor. Cys-564 and Cys-589 are joined by a disulfide. Residues 938–969 are disordered; the sequence is ATPVELTEPEQPKDNPEVTETPEATGVTVSGD. The 67-residue stretch at 975–1041 folds into the BIG2 domain; sequence ALSLKKGTTA…ANGKSASVTV (67 aa). The span at 1044–1061 shows a compositional bias: low complexity; the sequence is TEDSEVPGPTGPTEPTKP. Residues 1044–1081 are disordered; it reads TEDSEVPGPTGPTEPTKPGTEKPTTKPTTKPNDGKLSA. Residues 1086–1106 form a helical membrane-spanning segment; that stretch reads TAVLATIAALFALAGGAVVAV.

The protein belongs to the glycosyl hydrolase 20 family.

The protein resides in the cell membrane. It catalyses the reaction beta-D-Gal-(1-&gt;3)-beta-D-GlcNAc-(1-&gt;3)-beta-D-Gal-(1-&gt;4)-D-Glc + H2O = beta-D-galactosyl-(1-&gt;3)-N-acetyl-D-glucosamine + lactose. Present in the infant gut, this enzyme is involved in the assimilation of type-1 human milk oligosaccharides (HMOs). It hydrolyzes via a retaining mechanism the beta-D-GlcNAc-(1-&gt;3)-beta-D-Gal linkage in lacto-N-tetraose (LNT or beta-D-Gal-(1-&gt;3)-beta-D-GlcNAc-(1-&gt;3)-beta-D-Gal-(1-&gt;4)-D-Glc), an abundant HMO unique to human breast milk, releasing lacto-N-biose (LNB or beta-D-Gal-(1-&gt;3)-D-GlcNAc) and lactose. Is a key enzymatic factor for growth and proliferation of B.bifidum in the gut ecosystem of breast-fed infants. Has substrate preference for unmodified beta-linked LNB since it does not hydrolyze the fucosylated forms of lacto-N-tetraose (lacto-N-fucopentaose I and II) or lacto-N-neotetraose. Is also able to display transglycosylation activity in vitro. The polypeptide is Lacto-N-biosidase (Bifidobacterium bifidum (strain DSM 20082 / JCM 1254 / BCRC 11844 / KCTC 3440 / E319f (Variant a))).